A 258-amino-acid chain; its full sequence is Trifolitoxin-processing protein TfxF (258 aa).

In terms of biological role, the actions of the proteins TfxB, TfxD and TfxF are implicated in the processing of the inactive trifolitoxin (TfxA) precursor into the active peptide. This is Trifolitoxin-processing protein TfxF (tfxF) from Rhizobium leguminosarum bv. trifolii.